Reading from the N-terminus, the 302-residue chain is Glycine--tRNA ligase alpha subunit (302 aa).

It belongs to the class-II aminoacyl-tRNA synthetase family. In terms of assembly, tetramer of two alpha and two beta subunits.

It localises to the cytoplasm. It carries out the reaction tRNA(Gly) + glycine + ATP = glycyl-tRNA(Gly) + AMP + diphosphate. The sequence is that of Glycine--tRNA ligase alpha subunit from Psychromonas ingrahamii (strain DSM 17664 / CCUG 51855 / 37).